The following is a 709-amino-acid chain: Copper amine oxidase vicK1 (709 aa).

The first 20 residues, 1–20 (MKLFLLFTLTLVNIFSVSLQ), serve as a signal peptide directing secretion. The active-site Proton acceptor is Asp-365. Cys-383 and Cys-408 are joined by a disulfide. The Schiff-base intermediate with substrate; via topaquinone role is filled by Tyr-448. Position 448 is a 2',4',5'-topaquinone (Tyr-448). Positions 496 and 498 each coordinate Cu cation. Ca(2+) contacts are provided by Asp-505, Leu-506, Asp-507, Glu-548, Phe-641, Glu-645, Asp-651, and Leu-652. His-662 contributes to the Cu cation binding site.

Belongs to the copper/topaquinone oxidase family. In terms of assembly, homodimer; disulfide-linked. The cofactor is Cu cation. Requires Ca(2+) as cofactor. L-topaquinone serves as cofactor. In terms of processing, topaquinone (TPQ) is generated by copper-dependent autoxidation of a specific tyrosyl residue.

Its pathway is mycotoxin biosynthesis. In terms of biological role, copper amine oxidase, part of the gene cluster that mediates the biosynthesis of the secondary metabolite victorin, the molecular basis for Victoria blight of oats. Within the pathway, vicK1 catalyzes the oxidative deamination of the N-terminal glycyl moiety of the hexapeptides in order to produce the active glyoxylate form victorins. The pathway starts with the processing of the precursor vicA1 by several endopeptidases including kexin proteases as well as the cluster-specific S28 family peptidases vicPa and vicPb to produce 7 identical copies of the hexapeptide Gly-Leu-Lys-Leu-Ala-Phe. After being excised from the precursor peptide, the core peptides are cyclized and modified post-translationally by enzymes encoded within the gene cluster. The ustYa family oxidase vicYb is required for the formation of the macrocycle in victorin and the copper amine oxidases (CAOs) vicK1 and vicK2 are responsible for converting victorin to the active form by oxidizing the N-terminal glycyl residue in the peptides to glyoxylate. Relaxed substrate specificity of enzymes in the victorin biosynthetic pathway results in a metabolic grid that produces a set of analogs including victorinines B, C, E or HV-toxin M. The protein is Copper amine oxidase vicK1 of Bipolaris victoriae (strain FI3) (Victoria blight of oats agent).